Reading from the N-terminus, the 358-residue chain is Putative purine permease 12 (358 aa).

10 helical membrane-spanning segments follow: residues 29 to 49, 62 to 82, 100 to 120, 128 to 148, 153 to 173, 189 to 209, 235 to 255, 280 to 299, 300 to 316, and 320 to 340; these read WILV…SVLL, WIST…LSLL, LVWI…LYSV, STYS…YYYI, ITCL…LVSL, LIGC…LSLM, VASC…LLSV, LGCV…FSNL, ISTL…IAVF, and LTEV…FYIY.

This sequence belongs to the purine permeases (TC 2.A.7.14) family.

It is found in the membrane. The chain is Putative purine permease 12 (PUP12) from Arabidopsis thaliana (Mouse-ear cress).